A 430-amino-acid polypeptide reads, in one-letter code: Isochorismate synthase MenF (430 aa).

The Proton acceptor role is filled by lysine 187. Glutamate 237 (proton donor) is an active-site residue. Glutamate 281 and glutamate 414 together coordinate Mg(2+).

It belongs to the isochorismate synthase family. Requires Mg(2+) as cofactor.

It catalyses the reaction chorismate = isochorismate. The protein operates within quinol/quinone metabolism; 1,4-dihydroxy-2-naphthoate biosynthesis; 1,4-dihydroxy-2-naphthoate from chorismate: step 1/7. It participates in quinol/quinone metabolism; menaquinone biosynthesis. Its function is as follows. Catalyzes the conversion of chorismate to isochorismate. This is Isochorismate synthase MenF from Haemophilus influenzae (strain ATCC 51907 / DSM 11121 / KW20 / Rd).